The chain runs to 836 residues: Ethylene receptor 3 (836 aa).

The next 3 membrane-spanning stretches (helical) occupy residues L137 to R157, L166 to T186, and L204 to L224. 2 residues coordinate Cu cation: C176 and H180. Positions D269–L413 constitute a GAF domain. The stretch at A416–A452 forms a coiled coil. The region spanning M457–P691 is the Histidine kinase domain. A Response regulatory domain is found at L718–Q834.

Belongs to the ethylene receptor family. Cu cation serves as cofactor.

It localises to the endoplasmic reticulum membrane. The catalysed reaction is ATP + protein L-histidine = ADP + protein N-phospho-L-histidine.. In terms of biological role, ethylene receptor related to bacterial two-component regulators. Acts as a negative regulator of ethylene signaling. May delay the transition from the vegetative stage to the floral stage by up-regulating GI (GIGANTEA) and RCN1 and cause starch accumulation in stems by down-regulating the alpha-amylase AMY3D. The sequence is that of Ethylene receptor 3 from Oryza sativa subsp. indica (Rice).